Consider the following 428-residue polypeptide: Cholecystokinin receptor type A (428 aa).

Topologically, residues 1–41 are extracellular; the sequence is MDVVDSLLVNGSNITPPCELGLENETLFCLDQPRPSKEWQP. Asparagine 10 and asparagine 24 each carry an N-linked (GlcNAc...) asparagine glycan. The cysteines at positions 18 and 29 are disulfide-linked. Residues 42 to 67 form a helical membrane-spanning segment; the sequence is AVQILLYSLIFLLSVLGNTLVITVLI. Topologically, residues 68–77 are cytoplasmic; that stretch reads RNKRMRTVTN. Residues 78–104 form a helical membrane-spanning segment; that stretch reads IFLLSLAVSDLMLCLFCMPFNLIPNLL. Residues 105 to 115 lie on the Extracellular side of the membrane; the sequence is KDFIFGSAVCK. Cysteine 114 and cysteine 196 are oxidised to a cystine. The chain crosses the membrane as a helical span at residues 116–137; that stretch reads TTTYFMGTSVSVSTFNLVAISL. Topologically, residues 138–157 are cytoplasmic; sequence ERYGAICKPLQSRVWQTKSH. A helical transmembrane segment spans residues 158–178; it reads ALKVIAATWCLSFTIMTPYPI. The Extracellular portion of the chain corresponds to 179–210; the sequence is YSNLVPFTKNNNQTANMCRFLLPNDVMQQSWH. Residue asparagine 190 is glycosylated (N-linked (GlcNAc...) asparagine). The helical transmembrane segment at 211 to 234 threads the bilayer; it reads TFLLLILFLIPGIVMMVAYGLISL. Over 235–313 the chain is Cytoplasmic; it reads ELYQGIKFEA…NLMAKKRVIR (79 aa). The disordered stretch occupies residues 248-272; that stretch reads KSAKERKPSTTSSGKYEDSDGCYLQ. Residues 314 to 334 form a helical membrane-spanning segment; that stretch reads MLIVIVVLFFLCWMPIFSANA. Topologically, residues 335–349 are extracellular; it reads WRAYDTASAERRLSG. A helical membrane pass occupies residues 350–373; it reads TPISFILLLSYTSSCVNPIIYCFM. Residues 374 to 428 are Cytoplasmic-facing; sequence NKRFRLGFMATFPCCPNPGPPGARGEVGEEEEGGTTGASLSRFSYSHMSASVPPQ. Cysteine 387 carries the S-palmitoyl cysteine lipid modification. Residues 394 to 428 are disordered; it reads PGARGEVGEEEEGGTTGASLSRFSYSHMSASVPPQ. Polar residues predominate over residues 411 to 422; the sequence is ASLSRFSYSHMS.

It belongs to the G-protein coupled receptor 1 family.

The protein resides in the cell membrane. In terms of biological role, receptor for cholecystokinin. Mediates pancreatic growth and enzyme secretion, smooth muscle contraction of the gall bladder and stomach. Has a 1000-fold higher affinity for CCK rather than for gastrin. It modulates feeding and dopamine-induced behavior in the central and peripheral nervous system. This receptor mediates its action by association with G proteins that activate a phosphatidylinositol-calcium second messenger system. This is Cholecystokinin receptor type A (CCKAR) from Homo sapiens (Human).